Here is a 263-residue protein sequence, read N- to C-terminus: Protein PYRICULARIA ORYZAE RESISTANCE 21 (263 aa).

The 68-residue stretch at methionine 1–lysine 68 folds into the HMA domain. A metal cation-binding residues include cysteine 12 and cysteine 15. The segment at cysteine 126–proline 153 is disordered. A compositionally biased stretch (basic and acidic residues) spans lysine 139 to proline 153.

Functionally, involved in defense responses. Contributes to slowing defense responses toward Magnaporthe oryzae. The protein is Protein PYRICULARIA ORYZAE RESISTANCE 21 of Oryza sativa subsp. indica (Rice).